A 411-amino-acid polypeptide reads, in one-letter code: Serpin A3-1 (411 aa).

Positions 1–24 are cleaved as a signal peptide; the sequence is MRAERTSFLLALGLLVAGIRSVHC. Asn-100, Asn-180, Asn-230, and Asn-264 each carry an N-linked (GlcNAc...) asparagine glycan.

It belongs to the serpin family. In terms of assembly, homodimer. N-glycosylated. In terms of tissue distribution, detected in all tissues examined (at protein level). Abundantly expressed in liver, kidney and spleen. Lowest levels were observed in diaphragm muscle.

It localises to the cytoplasmic vesicle. The protein localises to the secretory vesicle. Its subcellular location is the chromaffin granule. It is found in the secreted. Potent inhibitor of the serine proteases elastase and trypsin. Moderately inhibits the serine proteases plasmin and chymotrypsin, and the thiol protease proenkephalin-processing enzyme. Does not inhibit the serine proteases cathepsin G, furin, kallikrein, thrombin, tissue plasminogen activator and urokinase, or the cysteine proteases cathepsin B, cathepsin L and papain. The sequence is that of Serpin A3-1 from Bos taurus (Bovine).